A 174-amino-acid chain; its full sequence is Keratin-associated protein 9-2 (174 aa).

Tandem repeats lie at residues 8-12, 13-17, 18-22, 37-41, 42-46, 51-55, 61-65, 66-70, 75-79, 80-84, 85-89, 90-94, 95-99, 144-148, 149-153, 154-158, and 168-172. Residues 8–172 are 17 X 5 AA repeats of C-C-[RQVSGE]-[SPTQ]-[TASP]; that stretch reads CCQPTCCRTT…TCVSSCCQPS (165 aa).

The protein belongs to the KRTAP type 9 family. Interacts with hair keratins.

Functionally, in the hair cortex, hair keratin intermediate filaments are embedded in an interfilamentous matrix, consisting of hair keratin-associated proteins (KRTAP), which are essential for the formation of a rigid and resistant hair shaft through their extensive disulfide bond cross-linking with abundant cysteine residues of hair keratins. The matrix proteins include the high-sulfur and high-glycine-tyrosine keratins. This chain is Keratin-associated protein 9-2 (KRTAP9-2), found in Homo sapiens (Human).